The following is a 226-amino-acid chain: Cold-regulated 413 inner membrane protein 2, chloroplastic (226 aa).

The transit peptide at Met-1–Tyr-76 directs the protein to the chloroplast. At Ala-77–Pro-79 the chain is on the stromal side. Residues Met-80–Ala-100 form a helical membrane-spanning segment. The Chloroplast intermembrane segment spans residues Arg-101–Thr-103. A helical transmembrane segment spans residues Gly-104 to Ser-124. The Stromal segment spans residues Trp-125–Glu-129. The chain crosses the membrane as a helical span at residues Tyr-130–Glu-150. The Chloroplast intermembrane portion of the chain corresponds to Leu-151–Glu-152. A helical transmembrane segment spans residues Leu-153 to Gly-173. At Lys-174–Glu-176 the chain is on the stromal side. Residues Gly-177–Gly-197 form a helical membrane-spanning segment. The Chloroplast intermembrane portion of the chain corresponds to Thr-198 to Gln-205. A helical membrane pass occupies residues Asn-206–Ile-226.

This sequence belongs to the Cold-regulated 413 protein family.

It is found in the plastid. The protein resides in the chloroplast inner membrane. This Arabidopsis thaliana (Mouse-ear cress) protein is Cold-regulated 413 inner membrane protein 2, chloroplastic (COR413IM2).